Reading from the N-terminus, the 620-residue chain is Protein CNGC15b (620 aa).

6 helical membrane passes run 73 to 93 (IFLVACLISLFVDPLFFYLPI), 102 to 122 (IGIAVEVFLIIIRSIADVFYV), 161 to 181 (GFFLDFIAALPLPQVLIWIVI), 198 to 218 (FIIIIQYLPRLFLIFPLSSQI), 237 to 257 (LMLYMLASHVLGACWYLLSIE), and 356 to 376 (GEIMFAIVIATLGLVLFALLI). 462–559 (LFDAMDERML…SSTRTVKAIS (98 aa)) provides a ligand contact to a nucleoside 3',5'-cyclic phosphate.

This sequence belongs to the cyclic nucleotide-gated cation channel (TC 1.A.1.5) family. As to quaternary structure, interacts (via N-terminus) with DMI1 (via c-terminus). The Nod factor has no effect on this interaction, implying that the complex is maintained after activation. Expressed in roots, stems, leaves, flowers and pods.

The protein resides in the nucleus membrane. Cyclic nucleotide-gated channel involved in the establishment of both rhizobial and mycorrhizal associations. Required for full activation of nuclear-localized Ca(2+) oscillations by Nod and Myc factors. Simultaneous activation of the K(+)-permeable channel DMI1 and the Ca(2+) channel CNGC15 can give rise to sustained Ca(2+) oscillations. May function during fertilization in both female and male gametophytic Ca(2+) signaling. The protein is Protein CNGC15b of Medicago truncatula (Barrel medic).